We begin with the raw amino-acid sequence, 195 residues long: MSKQEKSNVEDKSLDIETAAQVETAQESASGALEELSVEEQLERAKDTIKELEDSCDQFKDEALRAKAEMENIRKRAERDVSNARKFGIEKFSKELLPVIDSIEQALKHEVKLEEAIAMKEGIELTAKMLVDILKKNGVEELDPKGEKFDPNLHEAMAMIPNPEFEDNTIFDVFQKGYMLNGRIVRAAKVVIVKN.

It belongs to the GrpE family. In terms of assembly, homodimer.

It localises to the cytoplasm. Participates actively in the response to hyperosmotic and heat shock by preventing the aggregation of stress-denatured proteins, in association with DnaK and GrpE. It is the nucleotide exchange factor for DnaK and may function as a thermosensor. Unfolded proteins bind initially to DnaJ; upon interaction with the DnaJ-bound protein, DnaK hydrolyzes its bound ATP, resulting in the formation of a stable complex. GrpE releases ADP from DnaK; ATP binding to DnaK triggers the release of the substrate protein, thus completing the reaction cycle. Several rounds of ATP-dependent interactions between DnaJ, DnaK and GrpE are required for fully efficient folding. This chain is Protein GrpE, found in Francisella tularensis subsp. tularensis (strain FSC 198).